A 325-amino-acid chain; its full sequence is Post-GPI attachment to proteins factor 2-like (325 aa).

Transmembrane regions (helical) follow at residues 80–100, 130–150, 171–191, 205–225, 243–263, and 276–296; these read VVTA…AYVF, YFWR…AFVY, LLIT…GGVT, IFIT…KLNG, WKKI…VFFA, and WFAF…FTII.

It belongs to the PGAP2 family.

The protein localises to the membrane. This Drosophila melanogaster (Fruit fly) protein is Post-GPI attachment to proteins factor 2-like.